Here is a 176-residue protein sequence, read N- to C-terminus: Inner membrane-spanning protein YciB (176 aa).

5 helical membrane-spanning segments follow: residues 3–23 (FLFDLFPIILFFAAFKLWGIF), 49–69 (TMLWVSLGVIVVFGGATLVLH), 72–92 (KFIQWKPTVLYWLFAVGLVAA), 118–138 (KLNLAWAAFFAALGVTNLYVV), and 149–169 (FKLFGTTGAIVVFVILQSLWL).

The protein belongs to the YciB family.

It is found in the cell inner membrane. Functionally, plays a role in cell envelope biogenesis, maintenance of cell envelope integrity and membrane homeostasis. The sequence is that of Inner membrane-spanning protein YciB from Burkholderia mallei (strain NCTC 10247).